A 552-amino-acid polypeptide reads, in one-letter code: TBCC domain-containing protein 1 (552 aa).

The C-CAP/cofactor C-like domain occupies Pro304 to Leu435.

Belongs to the TBCC family. As to expression, expressed in brain and testis (at protein level).

It is found in the cytoplasm. Its subcellular location is the cytoskeleton. The protein localises to the microtubule organizing center. The protein resides in the centrosome. It localises to the spindle pole. Functionally, plays a role in the regulation of centrosome and Golgi apparatus positioning, with consequences on cell shape and cell migration. The protein is TBCC domain-containing protein 1 (Tbccd1) of Mus musculus (Mouse).